A 403-amino-acid polypeptide reads, in one-letter code: tRNA pseudouridine synthase 4 (403 aa).

Residue Asp-75 is the Nucleophile of the active site.

This sequence belongs to the pseudouridine synthase TruB family.

It is found in the nucleus. It localises to the mitochondrion. The catalysed reaction is uridine(55) in tRNA = pseudouridine(55) in tRNA. It catalyses the reaction a uridine in mRNA = a pseudouridine in mRNA. Functionally, responsible for synthesis of pseudouridine from uracil-55 in the psi GC loop of transfer RNAs. Also catalyzes pseudouridylation of mRNAs with the consensus sequence 5'-GGUUCRA-3'. This is tRNA pseudouridine synthase 4 (PUS4) from Saccharomyces cerevisiae (strain ATCC 204508 / S288c) (Baker's yeast).